We begin with the raw amino-acid sequence, 341 residues long: MLVLGLETSCDETGVALYDSERGLLADALFSQIDLHRAYGGVVPELASRDHVKRMLPLIRQVLAEADCVPTEIDAIAYTAGPGLVGALLVGASCAQALAFAWGIPALGVHHMEGHLLAPMLEEQPPQFPFVALLVSGGHTQLVRVDGIGQYELLGETLDDAAGEAFDKTAKMIGLNYPGGPEIARLATQGVAGRFVFPRPMTDRPGLDFSFSGLKTFALNTWQQCVSAGDDGEQTRCDISLAFQQAVVETLTIKCKRALKQTGLKRLVIAGGVSANKALRASLEKMLAEMKGNVFYARPEFCTDNGAMIAFAGCQRLQAGQQESLAISVQARWPMEQLSAL.

Residues histidine 111 and histidine 115 each coordinate Fe cation. Substrate-binding positions include 134–138 (LVSGG), aspartate 167, glycine 180, and asparagine 276. Aspartate 304 contacts Fe cation.

Belongs to the KAE1 / TsaD family. Fe(2+) is required as a cofactor.

The protein localises to the cytoplasm. The catalysed reaction is L-threonylcarbamoyladenylate + adenosine(37) in tRNA = N(6)-L-threonylcarbamoyladenosine(37) in tRNA + AMP + H(+). Functionally, required for the formation of a threonylcarbamoyl group on adenosine at position 37 (t(6)A37) in tRNAs that read codons beginning with adenine. Is involved in the transfer of the threonylcarbamoyl moiety of threonylcarbamoyl-AMP (TC-AMP) to the N6 group of A37, together with TsaE and TsaB. TsaD likely plays a direct catalytic role in this reaction. This chain is tRNA N6-adenosine threonylcarbamoyltransferase, found in Pseudomonas fluorescens (strain ATCC BAA-477 / NRRL B-23932 / Pf-5).